Here is a 404-residue protein sequence, read N- to C-terminus: Glucose-1-phosphate adenylyltransferase (404 aa).

Alpha-D-glucose 1-phosphate-binding positions include Y99, G164, 179-180 (EK), and S197.

This sequence belongs to the bacterial/plant glucose-1-phosphate adenylyltransferase family.

It catalyses the reaction alpha-D-glucose 1-phosphate + ATP + H(+) = ADP-alpha-D-glucose + diphosphate. Its pathway is glycan biosynthesis; glycogen biosynthesis. Functionally, involved in the biosynthesis of ADP-glucose building block, required in the biosynthesis of maltose-1-phosphate (M1P) and in the elongation reactions to produce linear alpha-1,4-glucans. Catalyzes the reaction between ATP and alpha-D-glucose 1-phosphate (G1P) to produce pyrophosphate and ADP-Glc. The chain is Glucose-1-phosphate adenylyltransferase from Mycolicibacterium smegmatis (strain ATCC 700084 / mc(2)155) (Mycobacterium smegmatis).